A 293-amino-acid chain; its full sequence is Bifunctional protein FolD (293 aa).

Residues 165–167 (GRG), T192, and V233 each bind NADP(+).

This sequence belongs to the tetrahydrofolate dehydrogenase/cyclohydrolase family. As to quaternary structure, homodimer.

It catalyses the reaction (6R)-5,10-methylene-5,6,7,8-tetrahydrofolate + NADP(+) = (6R)-5,10-methenyltetrahydrofolate + NADPH. The enzyme catalyses (6R)-5,10-methenyltetrahydrofolate + H2O = (6R)-10-formyltetrahydrofolate + H(+). Its pathway is one-carbon metabolism; tetrahydrofolate interconversion. In terms of biological role, catalyzes the oxidation of 5,10-methylenetetrahydrofolate to 5,10-methenyltetrahydrofolate and then the hydrolysis of 5,10-methenyltetrahydrofolate to 10-formyltetrahydrofolate. The protein is Bifunctional protein FolD of Streptomyces griseus subsp. griseus (strain JCM 4626 / CBS 651.72 / NBRC 13350 / KCC S-0626 / ISP 5235).